Here is a 188-residue protein sequence, read N- to C-terminus: Elongation factor P (188 aa).

This sequence belongs to the elongation factor P family.

It is found in the cytoplasm. Its pathway is protein biosynthesis; polypeptide chain elongation. Involved in peptide bond synthesis. Stimulates efficient translation and peptide-bond synthesis on native or reconstituted 70S ribosomes in vitro. Probably functions indirectly by altering the affinity of the ribosome for aminoacyl-tRNA, thus increasing their reactivity as acceptors for peptidyl transferase. The sequence is that of Elongation factor P from Mycoplasma mobile (strain ATCC 43663 / 163K / NCTC 11711) (Mesomycoplasma mobile).